The chain runs to 1131 residues: PolyA-specific ribonuclease subunit panl-2 (1131 aa).

One can recognise a USP domain in the interval 489–864 (VTMQSTHGMN…LPALLAYKKK (376 aa)). An Exonuclease domain is found at 909–1074 (VGLDAEFIKI…VDARYALKLY (166 aa)). Polar residues predominate over residues 1104-1115 (QTSSPLVVSTTR). Positions 1104–1131 (QTSSPLVVSTTRKTPEDTNPADAAPKSV) are disordered.

The protein is PolyA-specific ribonuclease subunit panl-2 of Caenorhabditis elegans.